We begin with the raw amino-acid sequence, 994 residues long: Phosphoenolpyruvate carboxylase (994 aa).

Residues 1–66 (MKSSGSARAT…QGRTREDKDR (66 aa)) are disordered. Low complexity-rich tracts occupy residues 14–25 (AVSSSSAPAHAE) and 41–54 (AAAR…AASA). Residues histidine 204 and lysine 646 contribute to the active site.

It belongs to the PEPCase type 1 family. The cofactor is Mg(2+).

The enzyme catalyses oxaloacetate + phosphate = phosphoenolpyruvate + hydrogencarbonate. Functionally, forms oxaloacetate, a four-carbon dicarboxylic acid source for the tricarboxylic acid cycle. In Burkholderia mallei (strain NCTC 10247), this protein is Phosphoenolpyruvate carboxylase.